The primary structure comprises 140 residues: Small ribosomal subunit protein uS19 (140 aa).

This sequence belongs to the universal ribosomal protein uS19 family.

Protein S19 forms a complex with S13 that binds strongly to the 16S ribosomal RNA. The chain is Small ribosomal subunit protein uS19 from Methanocella arvoryzae (strain DSM 22066 / NBRC 105507 / MRE50).